Reading from the N-terminus, the 80-residue chain is Toxin Acra1 (80 aa).

Residues 1–22 (MMKLVLFSIIVILFSLIGSIHG) form the signal peptide. The LCN-type CS-alpha/beta domain maps to 25 to 80 (VPGNYPLDSSGNKYPCTVLGDNQSCIDVCKKHGVKYGYCYSFKCWCEFLEDKNVSI). 3 cysteine pairs are disulfide-bonded: Cys-40-Cys-63, Cys-49-Cys-68, and Cys-53-Cys-70.

Expressed by the venom gland.

The protein resides in the secreted. Its function is as follows. Probable neurotoxin that inhibits ion channels. Is toxic to mice. Is about 2.8% of the total protein in the venom. This chain is Toxin Acra1, found in Androctonus crassicauda (Arabian fat-tailed scorpion).